We begin with the raw amino-acid sequence, 232 residues long: GDT1-like protein 5 (232 aa).

6 consecutive transmembrane segments (helical) span residues 13–33, 40–60, 72–92, 135–155, 175–195, and 207–227; these read LAMTVLSEIGDKTFFAAAILA, LVLAGCLTSLTVMTALSVSLG, THHVTTLLFFVFGILSLWEGF, PFVLQFFSPIFIKAFSITFFG, FGVVLGGVLAQALCTTAAVMG, and MVGLSSGVLFLLFGIMSYLSG.

The protein belongs to the GDT1 family.

The protein localises to the membrane. The sequence is that of GDT1-like protein 5 from Oryza sativa subsp. japonica (Rice).